The following is a 362-amino-acid chain: Chorismate synthase (362 aa).

The NADP(+) site is built by Arg48 and Arg54. FMN-binding positions include 125–127 (RSS), 238–239 (NA), Gly278, 293–297 (KPTSS), and Arg319.

Belongs to the chorismate synthase family. As to quaternary structure, homotetramer. FMNH2 serves as cofactor.

The catalysed reaction is 5-O-(1-carboxyvinyl)-3-phosphoshikimate = chorismate + phosphate. It functions in the pathway metabolic intermediate biosynthesis; chorismate biosynthesis; chorismate from D-erythrose 4-phosphate and phosphoenolpyruvate: step 7/7. Catalyzes the anti-1,4-elimination of the C-3 phosphate and the C-6 proR hydrogen from 5-enolpyruvylshikimate-3-phosphate (EPSP) to yield chorismate, which is the branch point compound that serves as the starting substrate for the three terminal pathways of aromatic amino acid biosynthesis. This reaction introduces a second double bond into the aromatic ring system. This Tolumonas auensis (strain DSM 9187 / NBRC 110442 / TA 4) protein is Chorismate synthase.